The primary structure comprises 187 residues: Protein canopy-1 (187 aa).

Residues methionine 1–serine 24 form the signal peptide. One can recognise a Saposin B-type domain in the interval glutamate 28–valine 181. 3 disulfide bridges follow: cysteine 32–cysteine 177, cysteine 35–cysteine 170, and cysteine 90–cysteine 143. A Prevents secretion from ER motif is present at residues histidine 184–leucine 187.

This sequence belongs to the canopy family. As to quaternary structure, homodimer. Interacts with fgfr1.

The protein localises to the endoplasmic reticulum. In terms of biological role, involved in the maintenance of the midbrain-hindbrain boundary (MHB) organizer. Contributes to a positive-feedback loop of FGF signaling in the MHB, enabling the MHB to exert its role as an organizer for the tectal and cerebellar development. This chain is Protein canopy-1 (cnpy1), found in Danio rerio (Zebrafish).